A 418-amino-acid polypeptide reads, in one-letter code: Lysophosphatidic acid phosphatase type 6 (418 aa).

Residues 1 to 25 constitute a mitochondrion transit peptide; sequence MRVWVPVGVLTSLAYCFHQRRVALA. The tract at residues 51–161 is substrate binding; that stretch reads RHGARSPLKP…VFIRSTNMFR (111 aa). The active-site Nucleophile is H52. The active-site Proton donor is the D327.

This sequence belongs to the histidine acid phosphatase family. Monomer.

It localises to the mitochondrion. It catalyses the reaction a phosphate monoester + H2O = an alcohol + phosphate. The enzyme catalyses 1-(9Z-octadecenoyl)-sn-glycero-3-phosphate + H2O = 1-(9Z-octadecenoyl)-sn-glycerol + phosphate. Hydrolyzes lysophosphatidic acid (LPA) containing a medium length fatty acid chain to the corresponding monoacylglycerol. Has highest activity with lysophosphatidic acid containing myristate (C14:0), monounsaturated oleate (C18:1) or palmitate (C16:0), and lower activity with C18:0 and C6:0 lysophosphatidic acid. The protein is Lysophosphatidic acid phosphatase type 6 (Acp6) of Mus musculus (Mouse).